Consider the following 48-residue polypeptide: Small, acid-soluble spore protein O (48 aa).

The segment at 1 to 48 (MAKRKANHVINGMNNAKRQGNGAGYIENDQHILTEAERQNNKKRKTNQ) is disordered. Over residues 28-40 (NDQHILTEAERQN) the composition is skewed to basic and acidic residues.

This sequence belongs to the SspO family.

The protein localises to the spore core. The polypeptide is Small, acid-soluble spore protein O (Bacillus licheniformis (strain ATCC 14580 / DSM 13 / JCM 2505 / CCUG 7422 / NBRC 12200 / NCIMB 9375 / NCTC 10341 / NRRL NRS-1264 / Gibson 46)).